Consider the following 513-residue polypeptide: ATP synthase subunit alpha (513 aa).

169–176 is an ATP binding site; that stretch reads GDRQTGKT.

The protein belongs to the ATPase alpha/beta chains family. As to quaternary structure, F-type ATPases have 2 components, CF(1) - the catalytic core - and CF(0) - the membrane proton channel. CF(1) has five subunits: alpha(3), beta(3), gamma(1), delta(1), epsilon(1). CF(0) has three main subunits: a(1), b(2) and c(9-12). The alpha and beta chains form an alternating ring which encloses part of the gamma chain. CF(1) is attached to CF(0) by a central stalk formed by the gamma and epsilon chains, while a peripheral stalk is formed by the delta and b chains.

The protein localises to the cell inner membrane. It carries out the reaction ATP + H2O + 4 H(+)(in) = ADP + phosphate + 5 H(+)(out). Its function is as follows. Produces ATP from ADP in the presence of a proton gradient across the membrane. The alpha chain is a regulatory subunit. In Haemophilus influenzae (strain ATCC 51907 / DSM 11121 / KW20 / Rd), this protein is ATP synthase subunit alpha.